Consider the following 435-residue polypeptide: Mitochondrial association factor 1 form b0 (435 aa).

A signal peptide spans 1-27; that stretch reads MWRIWRCRLSFLFVTGCLLGALTAGLG. The Vacuolar portion of the chain corresponds to 28-96; it reads SQMSDSVGRN…VTARRRRNRR (69 aa). The segment at 43–89 is disordered; it reads GVADASQEAGDVVEERTERTEEQVFAPGPPRRHSSESLFPRNPSVTA. Basic and acidic residues predominate over residues 55 to 64; that stretch reads VEERTERTEE. Residues 97 to 117 traverse the membrane as a helical segment; sequence ITLIATAVGVAVILAALYVLR. Topologically, residues 118–435 are cytoplasmic; the sequence is RRRAQPPQEP…ESTYLASMLD (318 aa). The tract at residues 120–162 is disordered; the sequence is RAQPPQEPEPPTRLRTPRPRAPSGQQQPSESEPPAGVPMKPGS.

Its subcellular location is the parasitophorous vacuole membrane. Its function is as follows. During host cell infection by tachyzoites, does not play a role in tethering the parasitophorous vacuole to the host mitochondria. In Toxoplasma gondii, this protein is Mitochondrial association factor 1 form b0.